A 444-amino-acid chain; its full sequence is Orexin receptor type 2 (444 aa).

Residues 1–10 (MSGTKLEDSP) are compositionally biased toward basic and acidic residues. Residues 1 to 20 (MSGTKLEDSPPCRNWSSASE) are disordered. Over 1-54 (MSGTKLEDSPPCRNWSSASELNETQEPFLNPTDYDDEEFLRYLWREYLHPKEYE) the chain is Extracellular. 2 N-linked (GlcNAc...) asparagine glycosylation sites follow: N14 and N22. The tract at residues 33 to 49 (DYDDEEFLRYLWREYLH) is required for response to orexin-A. The helical transmembrane segment at 55–75 (WVLIAGYIIVFVVALIGNVLV) threads the bilayer. At 76–88 (CVAVWKNHHMRTV) the chain is on the cytoplasmic side. The chain crosses the membrane as a helical span at residues 89-110 (TNYFIVNLSLADVLVTITCLPA). Over 111–127 (TLVVDITETWFFGQSLC) the chain is Extracellular. C127 and C210 are joined by a disulfide. A helical transmembrane segment spans residues 128–150 (KVIPYLQTVSVSVSVLTLSCIAL). Residues 151 to 170 (DRWYAICHPLMFKSTAKRAR) are Cytoplasmic-facing. A helical membrane pass occupies residues 171–191 (NSIVIIWIVSCIIMIPQAIVM). The Extracellular segment spans residues 192 to 222 (ECSTVFPGLANKTTLFTVCDERWGGEIYPKM). Residue N202 is glycosylated (N-linked (GlcNAc...) asparagine). A helical membrane pass occupies residues 223 to 243 (YHICFFLVTYMAPLCLMVLAY). Topologically, residues 244–304 (LQIFRKLWCR…QIRARRKTAR (61 aa)) are cytoplasmic. A helical membrane pass occupies residues 305–326 (MLMIVLLVFAICYLPISILNVL). N324 is a suvorexant binding site. Topologically, residues 327–342 (KRVFGMFAHTEDRETV) are extracellular. A helical transmembrane segment spans residues 343–366 (YAWFTFSHWLVYANSAANPIIYNF). Over 367 to 444 (LSGKFREEFK…ANGAGPLQNW (78 aa)) the chain is Cytoplasmic.

It belongs to the G-protein coupled receptor 1 family.

Its subcellular location is the cell membrane. Functionally, nonselective, high-affinity receptor for both orexin-A and orexin-B neuropeptides. Triggers an increase in cytoplasmic Ca(2+) levels in response to orexin-A binding. The sequence is that of Orexin receptor type 2 (HCRTR2) from Homo sapiens (Human).